A 269-amino-acid polypeptide reads, in one-letter code: Large ribosomal subunit protein uL3m (269 aa).

The transit peptide at 1-19 (MSKFLQGSIFSISKLHVRY) directs the protein to the mitochondrion.

This sequence belongs to the universal ribosomal protein uL3 family. As to quaternary structure, component of the mitochondrial large ribosomal subunit (mt-LSU). Mature yeast 74S mitochondrial ribosomes consist of a small (37S) and a large (54S) subunit. The 37S small subunit contains a 15S ribosomal RNA (15S mt-rRNA) and 34 different proteins. The 54S large subunit contains a 21S rRNA (21S mt-rRNA) and 46 different proteins.

It localises to the mitochondrion. Component of the mitochondrial ribosome (mitoribosome), a dedicated translation machinery responsible for the synthesis of mitochondrial genome-encoded proteins, including at least some of the essential transmembrane subunits of the mitochondrial respiratory chain. The mitoribosomes are attached to the mitochondrial inner membrane and translation products are cotranslationally integrated into the membrane. This chain is Large ribosomal subunit protein uL3m (MRPL9), found in Saccharomyces cerevisiae (strain ATCC 204508 / S288c) (Baker's yeast).